Reading from the N-terminus, the 850-residue chain is Protein STB2 (850 aa).

Ser594 and Ser625 each carry phosphoserine.

It to yeast STB6. In terms of assembly, interacts with SIN3.

The sequence is that of Protein STB2 (STB2) from Saccharomyces cerevisiae (strain ATCC 204508 / S288c) (Baker's yeast).